We begin with the raw amino-acid sequence, 279 residues long: Shikimate dehydrogenase (NADP(+)) (279 aa).

Residues S19 to S21 and T66 contribute to the shikimate site. K70 serves as the catalytic Proton acceptor. NADP(+) is bound at residue E82. Residues N91 and D106 each coordinate shikimate. NADP(+) contacts are provided by residues G130–A134 and L222. Shikimate is bound at residue Y224. Residue G245 coordinates NADP(+).

It belongs to the shikimate dehydrogenase family. Homodimer.

It carries out the reaction shikimate + NADP(+) = 3-dehydroshikimate + NADPH + H(+). It functions in the pathway metabolic intermediate biosynthesis; chorismate biosynthesis; chorismate from D-erythrose 4-phosphate and phosphoenolpyruvate: step 4/7. Functionally, involved in the biosynthesis of the chorismate, which leads to the biosynthesis of aromatic amino acids. Catalyzes the reversible NADPH linked reduction of 3-dehydroshikimate (DHSA) to yield shikimate (SA). This is Shikimate dehydrogenase (NADP(+)) from Methanococcus maripaludis (strain C6 / ATCC BAA-1332).